A 376-amino-acid chain; its full sequence is Glucose-1-phosphate adenylyltransferase (376 aa).

Residues Tyr-101, Gly-166, 181 to 182 (EK), and Ser-192 contribute to the alpha-D-glucose 1-phosphate site.

The protein belongs to the bacterial/plant glucose-1-phosphate adenylyltransferase family. Homotetramer.

The enzyme catalyses alpha-D-glucose 1-phosphate + ATP + H(+) = ADP-alpha-D-glucose + diphosphate. Its pathway is glycan biosynthesis; glycogen biosynthesis. Its function is as follows. Involved in the biosynthesis of ADP-glucose, a building block required for the elongation reactions to produce glycogen. Catalyzes the reaction between ATP and alpha-D-glucose 1-phosphate (G1P) to produce pyrophosphate and ADP-Glc. This is Glucose-1-phosphate adenylyltransferase from Bacillus cereus (strain ZK / E33L).